The chain runs to 85 residues: Large ribosomal subunit protein bL27 (85 aa).

The interval 1–20 is disordered; the sequence is MATKKAGGSTRNGRDSEAKR.

Belongs to the bacterial ribosomal protein bL27 family.

The polypeptide is Large ribosomal subunit protein bL27 (Actinobacillus succinogenes (strain ATCC 55618 / DSM 22257 / CCUG 43843 / 130Z)).